We begin with the raw amino-acid sequence, 557 residues long: Formate--tetrahydrofolate ligase 2 (557 aa).

66–73 lines the ATP pocket; it reads TPAGEGKT.

Belongs to the formate--tetrahydrofolate ligase family.

It catalyses the reaction (6S)-5,6,7,8-tetrahydrofolate + formate + ATP = (6R)-10-formyltetrahydrofolate + ADP + phosphate. The protein operates within one-carbon metabolism; tetrahydrofolate interconversion. In Streptococcus pyogenes serotype M6 (strain ATCC BAA-946 / MGAS10394), this protein is Formate--tetrahydrofolate ligase 2.